The primary structure comprises 654 residues: Probable replication restart protein PriA (654 aa).

Zn(2+)-binding residues include Cys-367, Cys-370, Cys-376, Cys-379, Cys-395, Cys-398, Cys-407, and Cys-410.

This sequence belongs to the helicase family. PriA subfamily. As to quaternary structure, component of the replication restart primosome. Zn(2+) is required as a cofactor.

Initiates the restart of stalled replication forks, which reloads the replicative helicase on sites other than the origin of replication. Recognizes and binds to abandoned replication forks and remodels them to uncover a helicase loading site. Promotes assembly of the primosome at these replication forks. The polypeptide is Probable replication restart protein PriA (Mycobacterium tuberculosis (strain CDC 1551 / Oshkosh)).